Consider the following 275-residue polypeptide: Large ribosomal subunit protein uL2 (275 aa).

2 disordered regions span residues 24-47 (IHKG…NHHG) and 227-261 (PVDH…KTRK).

This sequence belongs to the universal ribosomal protein uL2 family. As to quaternary structure, part of the 50S ribosomal subunit. Forms a bridge to the 30S subunit in the 70S ribosome.

In terms of biological role, one of the primary rRNA binding proteins. Required for association of the 30S and 50S subunits to form the 70S ribosome, for tRNA binding and peptide bond formation. It has been suggested to have peptidyltransferase activity; this is somewhat controversial. Makes several contacts with the 16S rRNA in the 70S ribosome. This chain is Large ribosomal subunit protein uL2, found in Xylella fastidiosa (strain M12).